Reading from the N-terminus, the 580-residue chain is DNA mismatch repair protein MutL (580 aa).

Belongs to the DNA mismatch repair MutL/HexB family.

Functionally, this protein is involved in the repair of mismatches in DNA. It is required for dam-dependent methyl-directed DNA mismatch repair. May act as a 'molecular matchmaker', a protein that promotes the formation of a stable complex between two or more DNA-binding proteins in an ATP-dependent manner without itself being part of a final effector complex. This chain is DNA mismatch repair protein MutL, found in Chlamydia felis (strain Fe/C-56) (Chlamydophila felis).